Here is a 451-residue protein sequence, read N- to C-terminus: Trigger factor (451 aa).

The PPIase FKBP-type domain occupies 170-256 (DHIATIDYCE…LTALKYKDLP (87 aa)).

It belongs to the FKBP-type PPIase family. Tig subfamily.

It is found in the cytoplasm. The catalysed reaction is [protein]-peptidylproline (omega=180) = [protein]-peptidylproline (omega=0). In terms of biological role, involved in protein export. Acts as a chaperone by maintaining the newly synthesized protein in an open conformation. Functions as a peptidyl-prolyl cis-trans isomerase. In Treponema denticola (strain ATCC 35405 / DSM 14222 / CIP 103919 / JCM 8153 / KCTC 15104), this protein is Trigger factor.